Consider the following 180-residue polypeptide: MALRSRFWGLFSVCRNPGCRFAALSTSSEPAAKPEVDPVENEAVAPEFTNRNPRNLELLSVARKERGWRTVFPSREFWHRLRVIRTQHHVEALVEHQNGKVVVSASTREWAIKKHLYSTRNVVACESIGRVLAQRCLEAGINFMVYQPTPWEAASDSMKRLQSAMTEGGVVLREPQRIYE.

Belongs to the universal ribosomal protein uL18 family. Component of the mitochondrial large ribosomal subunit (mt-LSU). Mature mammalian 55S mitochondrial ribosomes consist of a small (28S) and a large (39S) subunit. The 28S small subunit contains a 12S ribosomal RNA (12S mt-rRNA) and 30 different proteins. The 39S large subunit contains a 16S rRNA (16S mt-rRNA), a copy of mitochondrial valine transfer RNA (mt-tRNA(Val)), which plays an integral structural role, and 52 different proteins.

It localises to the mitochondrion. Together with thiosulfate sulfurtransferase (TST), acts as a mitochondrial import factor for the cytosolic 5S rRNA. The precursor form shows RNA chaperone activity; is able to fold the 5S rRNA into an import-competent conformation that is recognized by rhodanese (TST). Both the cytoplasmic and mitochondrial forms are able to bind to the helix IV-loop D in the gamma domain of the 5S rRNA. This is Large ribosomal subunit protein uL18m (MRPL18) from Homo sapiens (Human).